Reading from the N-terminus, the 491-residue chain is MTSIWGQIQHILQNTLAPGLFKVWISPLAGEVDGSTLRVEAPNEFVAGWVRDRLFEDIRTAACGVIGDTVEVVVTAGAPAAAAPRPVLAPRPAVVEVVPTAAPVPSVVPAVEARPSGHAPRRLSAETQQAQEQLGLPLDWAPVPQSRTNWRFSFDDFIVGPNNELACAAARGMCRDGLMTDTLFLSSGPGLGKTHLLHAVGRSLCESSNRSNPNVAYLTAEEFASRLIAALKARDVERFKARYRDVDVLLLEDVHFLQGKEKMQDEVLATVKALQSRGSRIVFSSSFAARDLKNVDNQLVSRFCSGFLAGIERPDFDTRRRILREKARIYQVMLPDNVTDLLAERISTDVRQIESCLHNLILKAKLLNRQISLEMAFEIIGNYAQAETQLDFEGIVRMVCEGFGLSPEQLNSRSRKREYVVARNAAYLLARKHTDLSLKEIGDRFNRRHSTVLKGITALEREMNRETPLGRQVANTISLLERNGRITHARH.

The domain I, interacts with DnaA modulators stretch occupies residues 1–68; that stretch reads MTSIWGQIQH…RTAACGVIGD (68 aa). Residues 68–146 are domain II; it reads DTVEVVVTAG…PLDWAPVPQS (79 aa). The tract at residues 147-364 is domain III, AAA+ region; sequence RTNWRFSFDD…SCLHNLILKA (218 aa). Residues glycine 190, glycine 192, lysine 193, and threonine 194 each coordinate ATP. Positions 365–491 are domain IV, binds dsDNA; it reads KLLNRQISLE…RNGRITHARH (127 aa).

The protein belongs to the DnaA family. Oligomerizes as a right-handed, spiral filament on DNA at oriC.

The protein resides in the cytoplasm. Its function is as follows. Plays an essential role in the initiation and regulation of chromosomal replication. ATP-DnaA binds to the origin of replication (oriC) to initiate formation of the DNA replication initiation complex once per cell cycle. Binds the DnaA box (a 9 base pair repeat at the origin) and separates the double-stranded (ds)DNA. Forms a right-handed helical filament on oriC DNA; dsDNA binds to the exterior of the filament while single-stranded (ss)DNA is stabiized in the filament's interior. The ATP-DnaA-oriC complex binds and stabilizes one strand of the AT-rich DNA unwinding element (DUE), permitting loading of DNA polymerase. After initiation quickly degrades to an ADP-DnaA complex that is not apt for DNA replication. Binds acidic phospholipids. The polypeptide is Chromosomal replication initiator protein DnaA (Nitratidesulfovibrio vulgaris (strain ATCC 29579 / DSM 644 / CCUG 34227 / NCIMB 8303 / VKM B-1760 / Hildenborough) (Desulfovibrio vulgaris)).